We begin with the raw amino-acid sequence, 160 residues long: Protein cornichon homolog 2 (160 aa).

At 1-10 (MAFTFAAFCY) the chain is on the cytoplasmic side. The helical transmembrane segment at 11–31 (MLTLVLCASLIFFVIWHIIAF) threads the bilayer. The Lumenal portion of the chain corresponds to 32-72 (DELRTDFKNPIDQGNPARARERLKNIERICCLLRKLVVPEY). The helical transmembrane segment at 73–93 (SIHGLFCLMFLCAAEWVTLGL) threads the bilayer. Residues 94–138 (NIPLLFYHLWRYFHRPADGSEVMYDAVSIMNADILNYCQKESWCK) are Cytoplasmic-facing. A helical transmembrane segment spans residues 139 to 159 (LAFYLLSFFYYLYSMVYTLVS). Residue Phe-160 is a topological domain, lumenal.

It belongs to the cornichon family. In terms of assembly, acts as an auxiliary subunit for AMPA-selective glutamate receptors (AMPARs). Found in a complex with GRIA1, GRIA2, GRIA3, GRIA4, CNIH3, CACNG2, CACNG3, CACNG4, CACNG5, CACNG7 and CACNG8. Interacts with CACGN8. Interacts with GRIA1. Found in a complex with GRIA1, GRIA2, GRIA3, GRIA4, DLG4 and CACNG8. In terms of tissue distribution, expression is up-regulated in dorsolateral prefrontal cortex of patients with schizophrenia (postmortem brain study).

Its subcellular location is the endoplasmic reticulum membrane. The protein localises to the postsynaptic cell membrane. The protein resides in the cell projection. It is found in the dendrite. It localises to the dendritic spine. Its subcellular location is the postsynaptic density. Regulates the trafficking and gating properties of AMPA-selective glutamate receptors (AMPARs). Promotes their targeting to the cell membrane and synapses and modulates their gating properties by regulating their rates of activation, deactivation and desensitization. Blocks CACNG8-mediated resensitization of AMPA receptors. This is Protein cornichon homolog 2 from Homo sapiens (Human).